We begin with the raw amino-acid sequence, 304 residues long: Oxygen-dependent coproporphyrinogen-III oxidase (304 aa).

Residue Ser93 participates in substrate binding. The a divalent metal cation site is built by His97 and His107. The active-site Proton donor is His107. 109-111 (NVR) lines the substrate pocket. His146 and His176 together coordinate a divalent metal cation. Positions 241–276 (YVEFNLVYDRGTLFGLQSGGRTESILMSLPPQVRWG) are important for dimerization. Residue 259–261 (GGR) coordinates substrate.

It belongs to the aerobic coproporphyrinogen-III oxidase family. Homodimer. It depends on a divalent metal cation as a cofactor.

The protein resides in the cytoplasm. It catalyses the reaction coproporphyrinogen III + O2 + 2 H(+) = protoporphyrinogen IX + 2 CO2 + 2 H2O. Its pathway is porphyrin-containing compound metabolism; protoporphyrin-IX biosynthesis; protoporphyrinogen-IX from coproporphyrinogen-III (O2 route): step 1/1. Its function is as follows. Involved in the heme biosynthesis. Catalyzes the aerobic oxidative decarboxylation of propionate groups of rings A and B of coproporphyrinogen-III to yield the vinyl groups in protoporphyrinogen-IX. The protein is Oxygen-dependent coproporphyrinogen-III oxidase of Pseudomonas syringae pv. syringae (strain B728a).